Reading from the N-terminus, the 168-residue chain is MPRSRINGNFIDKTSSIVANILLRIIPTTSGEKEAFTYYRDGMSAQSEGNYAEALQNYYEATRPEIDPYDRSYILYNIGLIHTSNGEHTKALEYYFRALERNPFLPQAFNNMAVICHYRGEQAIRQGDSEIAEAWSDQAAEYWKQAIALTPGNYIEAHNWLKITRRFE.

TPR repeat units follow at residues 35 to 68 (AFTYYRDGMSAQSEGNYAEALQNYYEATRPEIDP), 72 to 105 (SYILYNIGLIHTSNGEHTKALEYYFRALERNPFL), and 120 to 153 (GEQAIRQGDSEIAEAWSDQAAEYWKQAIALTPGN).

This sequence belongs to the Ycf3 family.

The protein resides in the plastid. The protein localises to the chloroplast thylakoid membrane. Essential for the assembly of the photosystem I (PSI) complex. May act as a chaperone-like factor to guide the assembly of the PSI subunits. The protein is Photosystem I assembly protein Ycf3 of Liriodendron tulipifera (Tuliptree).